A 310-amino-acid polypeptide reads, in one-letter code: Regulator of microtubule dynamics protein 1 (310 aa).

Lys165 carries the post-translational modification N6-succinyllysine. TPR repeat units follow at residues 168 to 204 and 222 to 258; these read AICI…NPKD and PWYQ…DPNF.

The protein belongs to the RMDN family. Interacts with microtubules.

The protein resides in the cytoplasm. The protein localises to the cytoskeleton. Its subcellular location is the spindle. It is found in the spindle pole. The protein is Regulator of microtubule dynamics protein 1 (Rmdn1) of Rattus norvegicus (Rat).